The chain runs to 338 residues: Holliday junction branch migration complex subunit RuvB (338 aa).

The large ATPase domain (RuvB-L) stretch occupies residues 4–184; sequence SDRLVSGKAR…FGISHHLQYY (181 aa). ATP is bound by residues Arg-24, Gly-65, Lys-68, Thr-69, Thr-70, 131-133, Arg-174, Tyr-184, and Arg-221; that span reads EDY. Thr-69 is a Mg(2+) binding site. Positions 185–255 are small ATPAse domain (RuvB-S); the sequence is HHDELTQIVM…LADEALELLA (71 aa). A head domain (RuvB-H) region spans residues 258 to 338; sequence HLGFDALDRR…NIEVPDGRNS (81 aa). DNA is bound by residues Arg-294, Arg-313, and Arg-318.

The protein belongs to the RuvB family. In terms of assembly, homohexamer. Forms an RuvA(8)-RuvB(12)-Holliday junction (HJ) complex. HJ DNA is sandwiched between 2 RuvA tetramers; dsDNA enters through RuvA and exits via RuvB. An RuvB hexamer assembles on each DNA strand where it exits the tetramer. Each RuvB hexamer is contacted by two RuvA subunits (via domain III) on 2 adjacent RuvB subunits; this complex drives branch migration. In the full resolvosome a probable DNA-RuvA(4)-RuvB(12)-RuvC(2) complex forms which resolves the HJ.

It is found in the cytoplasm. The catalysed reaction is ATP + H2O = ADP + phosphate + H(+). Its function is as follows. The RuvA-RuvB-RuvC complex processes Holliday junction (HJ) DNA during genetic recombination and DNA repair, while the RuvA-RuvB complex plays an important role in the rescue of blocked DNA replication forks via replication fork reversal (RFR). RuvA specifically binds to HJ cruciform DNA, conferring on it an open structure. The RuvB hexamer acts as an ATP-dependent pump, pulling dsDNA into and through the RuvAB complex. RuvB forms 2 homohexamers on either side of HJ DNA bound by 1 or 2 RuvA tetramers; 4 subunits per hexamer contact DNA at a time. Coordinated motions by a converter formed by DNA-disengaged RuvB subunits stimulates ATP hydrolysis and nucleotide exchange. Immobilization of the converter enables RuvB to convert the ATP-contained energy into a lever motion, pulling 2 nucleotides of DNA out of the RuvA tetramer per ATP hydrolyzed, thus driving DNA branch migration. The RuvB motors rotate together with the DNA substrate, which together with the progressing nucleotide cycle form the mechanistic basis for DNA recombination by continuous HJ branch migration. Branch migration allows RuvC to scan DNA until it finds its consensus sequence, where it cleaves and resolves cruciform DNA. This chain is Holliday junction branch migration complex subunit RuvB, found in Dichelobacter nodosus (strain VCS1703A).